The sequence spans 238 residues: Small ribosomal subunit protein uS3 (238 aa).

The KH type-2 domain maps to 39–107 (MREFIHDYAK…ELHLNIVEIR (69 aa)). Over residues 212–222 (PQAHDRRHSEA) the composition is skewed to basic and acidic residues. Residues 212–238 (PQAHDRRHSEAQEGAAPRPPRRDRERA) form a disordered region.

It belongs to the universal ribosomal protein uS3 family. In terms of assembly, part of the 30S ribosomal subunit. Forms a tight complex with proteins S10 and S14.

Functionally, binds the lower part of the 30S subunit head. Binds mRNA in the 70S ribosome, positioning it for translation. The polypeptide is Small ribosomal subunit protein uS3 (Cereibacter sphaeroides (strain ATCC 17029 / ATH 2.4.9) (Rhodobacter sphaeroides)).